Reading from the N-terminus, the 110-residue chain is Large ribosomal subunit protein uL22 (110 aa).

Belongs to the universal ribosomal protein uL22 family. In terms of assembly, part of the 50S ribosomal subunit.

This protein binds specifically to 23S rRNA; its binding is stimulated by other ribosomal proteins, e.g. L4, L17, and L20. It is important during the early stages of 50S assembly. It makes multiple contacts with different domains of the 23S rRNA in the assembled 50S subunit and ribosome. Functionally, the globular domain of the protein is located near the polypeptide exit tunnel on the outside of the subunit, while an extended beta-hairpin is found that lines the wall of the exit tunnel in the center of the 70S ribosome. This is Large ribosomal subunit protein uL22 from Vibrio parahaemolyticus serotype O3:K6 (strain RIMD 2210633).